A 195-amino-acid chain; its full sequence is Protein GrpE (195 aa).

The protein belongs to the GrpE family. As to quaternary structure, homodimer.

The protein resides in the cytoplasm. Functionally, participates actively in the response to hyperosmotic and heat shock by preventing the aggregation of stress-denatured proteins, in association with DnaK and GrpE. It is the nucleotide exchange factor for DnaK and may function as a thermosensor. Unfolded proteins bind initially to DnaJ; upon interaction with the DnaJ-bound protein, DnaK hydrolyzes its bound ATP, resulting in the formation of a stable complex. GrpE releases ADP from DnaK; ATP binding to DnaK triggers the release of the substrate protein, thus completing the reaction cycle. Several rounds of ATP-dependent interactions between DnaJ, DnaK and GrpE are required for fully efficient folding. The protein is Protein GrpE of Francisella tularensis subsp. mediasiatica (strain FSC147).